Here is a 129-residue protein sequence, read N- to C-terminus: Small ribosomal subunit protein uS9 (129 aa).

The protein belongs to the universal ribosomal protein uS9 family.

This is Small ribosomal subunit protein uS9 (rps9) from Thermoplasma acidophilum (strain ATCC 25905 / DSM 1728 / JCM 9062 / NBRC 15155 / AMRC-C165).